A 483-amino-acid polypeptide reads, in one-letter code: MNLKELLHNTKAKIYGKISSVEVRNLTRDSRNVGVGDIFIAKQGKHCDGNDFSHLAVENGAIAVASSIYNPFLPVVQIISSDLPRLEADLAAKYYGHPSQKLCVVGITGTNGKTTVSHLIKLLFDACDKPAGLIGTIEHILGNSRIQDGYTTPESCLLQKYLAKMVKSHLSAAVMEVSSIGLAVNRLANVDFDVGVLTNLTLDHLDFHSSFEEYKQAKLKLFSMLPSSGLAVVNNDLCDAAQFIEATQAQPITYGIEQHADYQASHVRFSPFGTDFDLLYKGETFACYSPLIGQHNIYNVLAAIAVTHQRLRCDLPHLISVIANVGAPRGRLEPIFSGPCPIYIDYAHTPDALDNVCQTLQALLPQDGRLIVVFGCGGDRDQSKRKIMAQVVEKYGFAVVTTDNPRGEDPEKIINEICSGFLKRNFSIEIDRKQAITYALSIASDRDIVLVAGKGHETYQIFKHQTIAFDDKEIVLGVLSSYV.

UDP-N-acetyl-alpha-D-muramoyl-L-alanyl-D-glutamate is bound at residue serine 30. 109-115 serves as a coordination point for ATP; it reads GTNGKTT. UDP-N-acetyl-alpha-D-muramoyl-L-alanyl-D-glutamate is bound by residues 151-152, serine 178, and arginine 186; that span reads TT. An N6-carboxylysine modification is found at lysine 218. Meso-2,6-diaminopimelate contacts are provided by residues arginine 380, 403-406, glycine 453, and glutamate 457; that span reads DNPR. Residues 403 to 406 carry the Meso-diaminopimelate recognition motif motif; it reads DNPR.

This sequence belongs to the MurCDEF family. MurE subfamily. The cofactor is Mg(2+). In terms of processing, carboxylation is probably crucial for Mg(2+) binding and, consequently, for the gamma-phosphate positioning of ATP.

Its subcellular location is the cytoplasm. The enzyme catalyses UDP-N-acetyl-alpha-D-muramoyl-L-alanyl-D-glutamate + meso-2,6-diaminopimelate + ATP = UDP-N-acetyl-alpha-D-muramoyl-L-alanyl-gamma-D-glutamyl-meso-2,6-diaminopimelate + ADP + phosphate + H(+). It participates in cell wall biogenesis; peptidoglycan biosynthesis. In terms of biological role, catalyzes the addition of meso-diaminopimelic acid to the nucleotide precursor UDP-N-acetylmuramoyl-L-alanyl-D-glutamate (UMAG) in the biosynthesis of bacterial cell-wall peptidoglycan. The sequence is that of UDP-N-acetylmuramoyl-L-alanyl-D-glutamate--2,6-diaminopimelate ligase from Chlamydia abortus (strain DSM 27085 / S26/3) (Chlamydophila abortus).